We begin with the raw amino-acid sequence, 170 residues long: Phosphopantetheine adenylyltransferase (170 aa).

Serine 14 is a substrate binding site. ATP contacts are provided by residues 14–15 (SF) and histidine 22. The substrate site is built by lysine 46, leucine 79, and arginine 93. ATP-binding positions include 94–96 (GIR), glutamate 104, and 129–135 (IAEVSST).

This sequence belongs to the bacterial CoaD family. In terms of assembly, homohexamer. Mg(2+) is required as a cofactor.

Its subcellular location is the cytoplasm. It carries out the reaction (R)-4'-phosphopantetheine + ATP + H(+) = 3'-dephospho-CoA + diphosphate. It functions in the pathway cofactor biosynthesis; coenzyme A biosynthesis; CoA from (R)-pantothenate: step 4/5. Its function is as follows. Reversibly transfers an adenylyl group from ATP to 4'-phosphopantetheine, yielding dephospho-CoA (dPCoA) and pyrophosphate. This is Phosphopantetheine adenylyltransferase from Neisseria meningitidis serogroup C (strain 053442).